The chain runs to 100 residues: Large ribosomal subunit protein uL23 (100 aa).

This sequence belongs to the universal ribosomal protein uL23 family. As to quaternary structure, part of the 50S ribosomal subunit. Contacts protein L29, and trigger factor when it is bound to the ribosome.

Functionally, one of the early assembly proteins it binds 23S rRNA. One of the proteins that surrounds the polypeptide exit tunnel on the outside of the ribosome. Forms the main docking site for trigger factor binding to the ribosome. This Thermotoga maritima (strain ATCC 43589 / DSM 3109 / JCM 10099 / NBRC 100826 / MSB8) protein is Large ribosomal subunit protein uL23.